The following is a 694-amino-acid chain: Transcriptional activator HAA1 (694 aa).

The copper-fist DNA-binding region spans 1–40 (MVLINGIKYACERCIRGHRVTTCNHTDQPLMMIKPKGRPS). Zn(2+) contacts are provided by C11, C14, C23, and H25. 2 disordered regions span residues 104–128 (QKRH…SQPM) and 209–240 (FNFL…DSSV). Residues 111–126 (SPSSSQKKGRSISRSQ) show a composition bias toward polar residues. A phosphoserine mark is found at S125, S231, S241, and S291. Disordered regions lie at residues 332 to 388 (FDIN…NGLF), 479 to 514 (EKER…HRYP), 566 to 588 (SSIH…SRQD), and 650 to 677 (MIST…PPSQ). Over residues 336–349 (DNCNRINSKSYSKT) the composition is skewed to polar residues. Residues 350 to 378 (NSMNGNGMNNSNNNNINSNGNDKNNNNSS) are compositionally biased toward low complexity. 2 stretches are compositionally biased toward polar residues: residues 566–577 (SSIHSVPQSINS) and 664–677 (SPMS…PPSQ).

The protein localises to the nucleus. In terms of biological role, regulates the transcription of a set of genes, many of which encode membrane proteins. Among the genes regulated are YGR138C and YRO2. Does not seem to be dependent on copper. The chain is Transcriptional activator HAA1 (HAA1) from Saccharomyces cerevisiae (strain ATCC 204508 / S288c) (Baker's yeast).